The following is a 780-amino-acid chain: Oocyte zinc finger protein XlCOF8.4 (780 aa).

15 C2H2-type zinc fingers span residues 250–272 (FPCSECGKCFAGSSELNVHRRTH), 278–300 (FSCSQCGKCFSNQTKLKYHHRTH), 306–328 (FSCSECGKCFSTPHVRARHQKTH), 334–356 (FPCSECGKCFARSSDVTVHRRTH), 362–384 (YSCSQCGKCFTRSSDLNVHRRTH), 390–412 (YSCSHCGKCFTTSSELNVHRRTH), 418–440 (YSCSECGKSFPTSSEFTSHWKTH), 446–468 (FSCVQCGKCFSKDTHLKYHYRTH), 474–496 (FSCFECGKCFTHNGSLKVHLKIH), 618–640 (LSCSECGKCFSTYHVLARHQKTH), 646–668 (FSCSECEKCYARSSDLNVHRRTH), 674–696 (YSCSECGKCFTRSSDFNVHRRTH), 702–724 (YSCSECGRCFPTSSVLTSHWRTH), 730–752 (FSCTECGKCFSRETYLKYHHRTH), and 758–780 (FSCSECGKCFTCNSSLKVHFQLH).

Belongs to the krueppel C2H2-type zinc-finger protein family.

The protein localises to the nucleus. Its function is as follows. May be involved in transcriptional regulation. The protein is Oocyte zinc finger protein XlCOF8.4 of Xenopus laevis (African clawed frog).